The chain runs to 299 residues: Probable lipid kinase YegS (299 aa).

In terms of domain architecture, DAGKc spans Ala-2–Thr-133. Residues Thr-40, Gly-66–Glu-72, and Thr-95 each bind ATP. The Mg(2+) site is built by Leu-215, Asp-218, and Leu-220. The active-site Proton acceptor is Glu-271.

Belongs to the diacylglycerol/lipid kinase family. YegS lipid kinase subfamily. The cofactor is Mg(2+). Requires Ca(2+) as cofactor.

It localises to the cytoplasm. In terms of biological role, probably phosphorylates lipids; the in vivo substrate is unknown. The sequence is that of Probable lipid kinase YegS from Salmonella choleraesuis (strain SC-B67).